Here is a 645-residue protein sequence, read N- to C-terminus: 1,4-alpha-glucan branching enzyme GlgB (645 aa).

D309 functions as the Nucleophile in the catalytic mechanism. The Proton donor role is filled by E352. The disordered stretch occupies residues V619–R645. Over residues R636–R645 the composition is skewed to polar residues.

The protein belongs to the glycosyl hydrolase 13 family. GlgB subfamily. Monomer.

The enzyme catalyses Transfers a segment of a (1-&gt;4)-alpha-D-glucan chain to a primary hydroxy group in a similar glucan chain.. Its pathway is glycan biosynthesis; glycogen biosynthesis. In terms of biological role, catalyzes the formation of the alpha-1,6-glucosidic linkages in glycogen by scission of a 1,4-alpha-linked oligosaccharide from growing alpha-1,4-glucan chains and the subsequent attachment of the oligosaccharide to the alpha-1,6 position. This is 1,4-alpha-glucan branching enzyme GlgB from Bacillus cereus (strain 03BB102).